The following is a 180-amino-acid chain: MSRVGKLPVAIPNGVTVTVTPDNVVTVKGPKGELVKAMSNKINIAVEDNSVVVTRDNDHKDVRALHGLTRALVNNMVTGVNEGYVKTLELIGVGYRAQLQGKKLVLSLGFSHPVEMEAVSGVEFEVEGGTKVKVKGIDKELVGAVAADIRKWRKPEPYKGKGIKYENEVIRRKEGKTGKK.

It belongs to the universal ribosomal protein uL6 family. In terms of assembly, part of the 50S ribosomal subunit.

In terms of biological role, this protein binds to the 23S rRNA, and is important in its secondary structure. It is located near the subunit interface in the base of the L7/L12 stalk, and near the tRNA binding site of the peptidyltransferase center. This Clostridium botulinum (strain ATCC 19397 / Type A) protein is Large ribosomal subunit protein uL6.